Consider the following 144-residue polypeptide: Cysteine-rich tail protein 1 (144 aa).

A disordered region spans residues A51–P105. The segment covering I78–A98 has biased composition (polar residues).

This sequence belongs to the CYSRT1 family. In terms of assembly, interacts with LCE1B; the interaction is direct. Interacts with LCE2C; the interaction is direct. Interacts with LCE3A; the interaction is direct. Interacts with LCE3C; the interaction is direct. Interacts with LCE4A; the interaction is direct. Interacts with LCE5A; the interaction is direct. Interacts with LCE1C. Interacts with LCE1D. Interacts with LCE1E. Interacts with LCE2A. Interacts with LCE3D. Interacts with LCE3E. Interacts with LCE1A. As to expression, expressed in the stratum granulosum, in skin and oral epithelia (at protein level).

Its subcellular location is the cornified envelope. Its function is as follows. Component of the stratum corneum that may contribute to epidermal antimicrobial host defenses. The chain is Cysteine-rich tail protein 1 (CYSRT1) from Homo sapiens (Human).